The sequence spans 318 residues: Acetyl-coenzyme A carboxylase carboxyl transferase subunit alpha (318 aa).

One can recognise a CoA carboxyltransferase C-terminal domain in the interval Asp-32–Glu-293.

This sequence belongs to the AccA family. In terms of assembly, acetyl-CoA carboxylase is a heterohexamer composed of biotin carboxyl carrier protein (AccB), biotin carboxylase (AccC) and two subunits each of ACCase subunit alpha (AccA) and ACCase subunit beta (AccD).

The protein resides in the cytoplasm. It catalyses the reaction N(6)-carboxybiotinyl-L-lysyl-[protein] + acetyl-CoA = N(6)-biotinyl-L-lysyl-[protein] + malonyl-CoA. Its pathway is lipid metabolism; malonyl-CoA biosynthesis; malonyl-CoA from acetyl-CoA: step 1/1. In terms of biological role, component of the acetyl coenzyme A carboxylase (ACC) complex. First, biotin carboxylase catalyzes the carboxylation of biotin on its carrier protein (BCCP) and then the CO(2) group is transferred by the carboxyltransferase to acetyl-CoA to form malonyl-CoA. The polypeptide is Acetyl-coenzyme A carboxylase carboxyl transferase subunit alpha (Syntrophomonas wolfei subsp. wolfei (strain DSM 2245B / Goettingen)).